Reading from the N-terminus, the 294-residue chain is Melanocortin receptor 5 (294 aa).

Topologically, residues 1-29 (FLDLQLNATEGNVSGPSVGNTSSPCEDMG) are extracellular. Residues Asn-7, Asn-12, and Asn-20 are each glycosylated (N-linked (GlcNAc...) asparagine). The helical transmembrane segment at 30 to 53 (IEVEVFLTLGLISLLENILVIGAI) threads the bilayer. At 54–65 (ARNKNLHVPMYF) the chain is on the cytoplasmic side. A helical transmembrane segment spans residues 66 to 89 (FVCSLAVADMLVSLSNSWETITIY). The Extracellular portion of the chain corresponds to 90 to 106 (LIANKHLVLSDTSVRHL). A helical transmembrane segment spans residues 107–130 (DNVFDSMICISLVASMCSLLAVAV). Over 131–147 (DRYVTIFYALRYQHLMT) the chain is Cytoplasmic. Residues 148-171 (GRRCGAIIAGIWALCTGCGPVFIV) form a helical membrane-spanning segment. At 172–178 (YYESTYV) the chain is on the extracellular side. A helical transmembrane segment spans residues 179–203 (VVCLVAMFLTMLLLMASLYAHMFLQ). The Cytoplasmic portion of the chain corresponds to 204–231 (ARAHVRRIAALPGYRSARQRTSMKGAVT). Residues 232–257 (LAMLLGVFIVCWAPFFLHLILMISCP) traverse the membrane as a helical segment. The Extracellular segment spans residues 258–265 (QNLYCSCF). A helical membrane pass occupies residues 266–289 (MSHFNMYLILIMCNSVIDPLIYAF). Over 290–294 (RSQEK) the chain is Cytoplasmic.

This sequence belongs to the G-protein coupled receptor 1 family.

Its subcellular location is the cell membrane. In terms of biological role, receptor for MSH (alpha, beta and gamma) and ACTH. The activity of this receptor is mediated by G proteins which activate adenylate cyclase. This receptor is a possible mediator of the immunomodulation properties of melanocortins. In Sus scrofa (Pig), this protein is Melanocortin receptor 5 (MC5R).